A 201-amino-acid chain; its full sequence is UPF0301 protein RER_60040 (201 aa).

It belongs to the UPF0301 (AlgH) family.

The sequence is that of UPF0301 protein RER_60040 from Rhodococcus erythropolis (strain PR4 / NBRC 100887).